A 287-amino-acid chain; its full sequence is UPF0725 protein At1g19060 (287 aa).

It belongs to the UPF0725 (EMB2204) family.

The polypeptide is UPF0725 protein At1g19060 (Arabidopsis thaliana (Mouse-ear cress)).